We begin with the raw amino-acid sequence, 487 residues long: Sensor protein CseC (487 aa).

Positions 1–11 (MRGNLRRPGPA) are enriched in low complexity. The disordered stretch occupies residues 1 to 41 (MRGNLRRPGPAGTAGPGRTGIRTSADGGRARPRTGAGTGVR). 2 helical membrane passes run 63–83 (ISAAIALVGALVALALSLVVH) and 185–205 (ALIIGSIAVVFGGSALGVLIG). Residues 206–262 (GQLSRRLRKAAAAANQVAQGERDVRVRDAIGGVVRDETDDLARAVDAMADALQQRIE) form the HAMP domain. The Histidine kinase domain maps to 270 to 472 (DIAHELRTPV…VAVLWLPEHA (203 aa)). Histidine 273 bears the Phosphohistidine; by autocatalysis mark.

It localises to the cell membrane. The catalysed reaction is ATP + protein L-histidine = ADP + protein N-phospho-L-histidine.. In Streptomyces avermitilis (strain ATCC 31267 / DSM 46492 / JCM 5070 / NBRC 14893 / NCIMB 12804 / NRRL 8165 / MA-4680), this protein is Sensor protein CseC (cseC).